The sequence spans 306 residues: Choline-binding protein (306 aa).

The first 22 residues, 1–22 (MKRKYLKLMIGLALAATLTLSG), serve as a signal peptide directing secretion. Cys23 carries N-palmitoyl cysteine lipidation. Residue Cys23 is the site of S-diacylglycerol cysteine attachment.

Belongs to the OsmX family.

The protein localises to the cell membrane. In terms of biological role, member of a high affinity multicomponent binding-protein-dependent transport system for choline. The chain is Choline-binding protein (opuBC) from Bacillus subtilis (strain 168).